The primary structure comprises 469 residues: uncharacterized protein (469 aa).

The next 3 membrane-spanning stretches (helical) occupy residues 42–62 (DVII…AYVI), 179–199 (IVLP…VTPS), and 249–269 (NLKY…GLFV).

It localises to the cell membrane. This is an uncharacterized protein from Methanocaldococcus jannaschii (strain ATCC 43067 / DSM 2661 / JAL-1 / JCM 10045 / NBRC 100440) (Methanococcus jannaschii).